Reading from the N-terminus, the 520-residue chain is Interferon lambda receptor 1 (520 aa).

Positions M1–G20 are cleaved as a signal peptide. The Extracellular portion of the chain corresponds to R21–A228. The 101-residue stretch at P26–A126 folds into the Fibronectin type-III domain. Residues N29 and N36 are each glycosylated (N-linked (GlcNAc...) asparagine). 2 disulfide bridges follow: C74–C82 and C86–C150. N142 and N169 each carry an N-linked (GlcNAc...) asparagine glycan. C195 and C217 form a disulfide bridge. Residues F229–W249 traverse the membrane as a helical segment. Over K250–R520 the chain is Cytoplasmic. 2 disordered regions span residues V302–E439 and E477–R520. Positions A323–D336 are enriched in acidic residues. Residues S380–S392 show a composition bias toward low complexity. Residues S479–D495 show a composition bias toward acidic residues.

The protein belongs to the type II cytokine receptor family. As to quaternary structure, heterodimer with IL10RB. In terms of processing, ubiquitinated by FBXO45-containing E3 ligase leading to proteasomal degradation. As to expression, widely expressed.

The protein localises to the membrane. The IFNLR1/IL10RB dimer is a receptor for the cytokine ligands IFNL2 and IFNL3 and mediates their antiviral activity. The ligand/receptor complex stimulate the activation of the JAK/STAT signaling pathway leading to the expression of IFN-stimulated genes (ISG), which contribute to the antiviral state. Determines the cell type specificity of the lambda interferon action. Shows a more restricted pattern of expression in the epithelial tissues thereby limiting responses to lambda interferons primarily to epithelial cells of the respiratory, gastrointestinal, and reproductive tracts. Seems not to be essential for early virus-activated host defense in vaginal infection, but plays an important role in Toll-like receptor (TLR)-induced antiviral defense. Plays a significant role in the antiviral immune defense in the intestinal epithelium. The chain is Interferon lambda receptor 1 (IFNLR1) from Homo sapiens (Human).